Consider the following 251-residue polypeptide: SPbeta prophage-derived putative antirepressor protein YoqD (251 aa).

The protein is SPbeta prophage-derived putative antirepressor protein YoqD (yoqD) of Bacillus subtilis (strain 168).